The following is a 103-amino-acid chain: MKNPLLRPWLTEKSTGLTEQKGQYVFQVKLDADKIDIRMAVEEKFGVEVKSVRTVNCLGKSRRQYTRKGLIAGKKNDWKKAIVTLREGQSIDYYSGAAPKGEG.

It belongs to the universal ribosomal protein uL23 family. In terms of assembly, part of the 50S ribosomal subunit. Contacts protein L29, and trigger factor when it is bound to the ribosome.

Its function is as follows. One of the early assembly proteins it binds 23S rRNA. One of the proteins that surrounds the polypeptide exit tunnel on the outside of the ribosome. Forms the main docking site for trigger factor binding to the ribosome. The sequence is that of Large ribosomal subunit protein uL23 from Chlorobium luteolum (strain DSM 273 / BCRC 81028 / 2530) (Pelodictyon luteolum).